Here is a 134-residue protein sequence, read N- to C-terminus: 15.4 kDa class V heat shock protein (134 aa).

The 108-residue stretch at 19–126 (SLNNYQENHV…LIDPSDVPES (108 aa)) folds into the sHSP domain.

Belongs to the small heat shock protein (HSP20) family. May form oligomeric structures.

The protein resides in the cytoplasm. This is 15.4 kDa class V heat shock protein (HSP15.4) from Arabidopsis thaliana (Mouse-ear cress).